Consider the following 120-residue polypeptide: Anti-adapter protein IraM (120 aa).

Belongs to the IraM/RssC family.

The protein resides in the cytoplasm. Involved in the stabilization of the sigma stress factor RpoS. In Salmonella typhimurium (strain LT2 / SGSC1412 / ATCC 700720), this protein is Anti-adapter protein IraM.